A 138-amino-acid chain; its full sequence is MLLPKRTKFRKMHRGRLKGVATRANTVVFGEFGIQALEPVWLTSRQIEATRRSITRYVRRTGKIWIRVFPDRSVTERAAESRMGAGKGAVSYWVAVVKPGTVLFEINGLSEEMSHQVLKSASYKLPIKTKIISRESGN.

It belongs to the universal ribosomal protein uL16 family. In terms of assembly, part of the 50S ribosomal subunit.

It is found in the plastid. The protein localises to the chloroplast. The protein is Large ribosomal subunit protein uL16c of Emiliania huxleyi (Coccolithophore).